Consider the following 374-residue polypeptide: tRNA-specific 2-thiouridylase MnmA (374 aa).

Residues 17–24 and Met-43 each bind ATP; that span reads GMSGGVDS. The segment at 103–105 is interaction with target base in tRNA; sequence NPD. Cys-108 functions as the Nucleophile in the catalytic mechanism. The cysteines at positions 108 and 204 are disulfide-linked. Gly-132 contributes to the ATP binding site. Residues 154–156 form an interaction with tRNA region; the sequence is KDQ. The Cysteine persulfide intermediate role is filled by Cys-204. The tract at residues 316-317 is interaction with tRNA; the sequence is RY.

This sequence belongs to the MnmA/TRMU family.

Its subcellular location is the cytoplasm. It catalyses the reaction S-sulfanyl-L-cysteinyl-[protein] + uridine(34) in tRNA + AH2 + ATP = 2-thiouridine(34) in tRNA + L-cysteinyl-[protein] + A + AMP + diphosphate + H(+). Its function is as follows. Catalyzes the 2-thiolation of uridine at the wobble position (U34) of tRNA, leading to the formation of s(2)U34. The chain is tRNA-specific 2-thiouridylase MnmA from Pseudomonas entomophila (strain L48).